A 99-amino-acid chain; its full sequence is Small ribosomal subunit protein bS20 (99 aa).

Belongs to the bacterial ribosomal protein bS20 family.

In terms of biological role, binds directly to 16S ribosomal RNA. This chain is Small ribosomal subunit protein bS20, found in Caldicellulosiruptor bescii (strain ATCC BAA-1888 / DSM 6725 / KCTC 15123 / Z-1320) (Anaerocellum thermophilum).